The sequence spans 475 residues: Coronin-2B (475 aa).

5 WD repeats span residues 80–120, 130–172, 174–212, 215–258, and 260–303; these read GHQG…LKRN, GHSR…KMID, HTDVILCMSFNTDGSLMATTCKDKKLRVLEPRSGRVLQE, CKNH…MPVT, and EEID…PYLT. A coiled-coil region spans residues 431–470; sequence NELLRMFFKQQEEIRRLKEQLSQRDLLVRQLELELKNLRN.

It belongs to the WD repeat coronin family.

Its subcellular location is the cytoplasm. The protein localises to the cytoskeleton. Its function is as follows. May play a role in the reorganization of neuronal actin structure. This Xenopus laevis (African clawed frog) protein is Coronin-2B (coro2b).